The primary structure comprises 937 residues: Molybdenum cofactor sulfurase (937 aa).

Lys-237 bears the N6-(pyridoxal phosphate)lysine mark. The active site involves Cys-397. Disordered regions lie at residues 633–710 (GQGK…RRIL), 756–795 (PSPS…KLNP), and 897–921 (KEGT…GGNG). The segment covering 638-652 (MTRHAKAHLQRHQHQ) has biased composition (basic residues). The region spanning 682–935 (TPPSPPDSDT…VRVGDVVRPS (254 aa)) is the MOSC domain. Over residues 756–767 (PSPSTPSASPSN) the composition is skewed to low complexity. Gly residues predominate over residues 900-921 (TGMGMGTGTGTGTGTRSMGGNG).

This sequence belongs to the class-V pyridoxal-phosphate-dependent aminotransferase family. MOCOS subfamily. The cofactor is pyridoxal 5'-phosphate.

The enzyme catalyses Mo-molybdopterin + L-cysteine + AH2 = thio-Mo-molybdopterin + L-alanine + A + H2O. Its pathway is cofactor biosynthesis; molybdopterin biosynthesis. Functionally, sulfurates the molybdenum cofactor. Sulfation of molybdenum is essential for xanthine dehydrogenase (XDH) and aldehyde oxidase (ADO) enzymes in which molybdenum cofactor is liganded by 1 oxygen and 1 sulfur atom in active form. This chain is Molybdenum cofactor sulfurase (nit-13), found in Neurospora crassa (strain ATCC 24698 / 74-OR23-1A / CBS 708.71 / DSM 1257 / FGSC 987).